Reading from the N-terminus, the 58-residue chain is Small ribosomal subunit protein bS21 (58 aa).

This sequence belongs to the bacterial ribosomal protein bS21 family.

In Picosynechococcus sp. (strain ATCC 27264 / PCC 7002 / PR-6) (Agmenellum quadruplicatum), this protein is Small ribosomal subunit protein bS21.